The sequence spans 342 residues: tRNA N6-adenosine threonylcarbamoyltransferase (342 aa).

The Fe cation site is built by His120 and His124. Substrate-binding positions include 142-146, Asp175, Gly188, Asp192, and Asn281; that span reads VVSGG. Residue Asp310 participates in Fe cation binding.

This sequence belongs to the KAE1 / TsaD family. It depends on Fe(2+) as a cofactor.

It localises to the cytoplasm. It catalyses the reaction L-threonylcarbamoyladenylate + adenosine(37) in tRNA = N(6)-L-threonylcarbamoyladenosine(37) in tRNA + AMP + H(+). Its function is as follows. Required for the formation of a threonylcarbamoyl group on adenosine at position 37 (t(6)A37) in tRNAs that read codons beginning with adenine. Is involved in the transfer of the threonylcarbamoyl moiety of threonylcarbamoyl-AMP (TC-AMP) to the N6 group of A37, together with TsaE and TsaB. TsaD likely plays a direct catalytic role in this reaction. This Geobacillus thermodenitrificans (strain NG80-2) protein is tRNA N6-adenosine threonylcarbamoyltransferase.